The primary structure comprises 78 residues: Hainantoxin-XX (78 aa).

The N-terminal stretch at 1-23 is a signal peptide; the sequence is MKSATLLALSFLLIALYFLICEA. A propeptide spanning residues 24–47 is cleaved from the precursor; sequence EHSRYEEHEILEENMGDVVNLEQR. Cystine bridges form between cysteine 49-cysteine 62, cysteine 56-cysteine 66, and cysteine 61-cysteine 77.

Belongs to the hainantoxin family. 20 subfamily. Expressed by the venom gland.

It is found in the secreted. In terms of biological role, putative ion channel inhibitor. This chain is Hainantoxin-XX, found in Cyriopagopus hainanus (Chinese bird spider).